We begin with the raw amino-acid sequence, 101 residues long: Phosphoribosyl-ATP pyrophosphatase (101 aa).

It belongs to the PRA-PH family.

The protein resides in the cytoplasm. The enzyme catalyses 1-(5-phospho-beta-D-ribosyl)-ATP + H2O = 1-(5-phospho-beta-D-ribosyl)-5'-AMP + diphosphate + H(+). It functions in the pathway amino-acid biosynthesis; L-histidine biosynthesis; L-histidine from 5-phospho-alpha-D-ribose 1-diphosphate: step 2/9. The sequence is that of Phosphoribosyl-ATP pyrophosphatase from Natronomonas pharaonis (strain ATCC 35678 / DSM 2160 / CIP 103997 / JCM 8858 / NBRC 14720 / NCIMB 2260 / Gabara) (Halobacterium pharaonis).